The chain runs to 410 residues: Acetate kinase (410 aa).

N7 lines the Mg(2+) pocket. K14 contributes to the ATP binding site. R88 serves as a coordination point for substrate. The active-site Proton donor/acceptor is the D145. ATP is bound by residues 203–207 (HAGNG), 278–280 (DTR), and 326–330 (GIGEN). E379 lines the Mg(2+) pocket.

Belongs to the acetokinase family. In terms of assembly, homodimer. Mg(2+) is required as a cofactor. The cofactor is Mn(2+).

It localises to the cytoplasm. The catalysed reaction is acetate + ATP = acetyl phosphate + ADP. It participates in metabolic intermediate biosynthesis; acetyl-CoA biosynthesis; acetyl-CoA from acetate: step 1/2. Catalyzes the formation of acetyl phosphate from acetate and ATP. Can also catalyze the reverse reaction. The polypeptide is Acetate kinase (Onion yellows phytoplasma (strain OY-M)).